The chain runs to 146 residues: Globin (146 aa).

The residue at position 1 (Ala1) is an N-acetylalanine. Positions 1–146 (ALSAAEAEVV…IIDAMKKAGK (146 aa)) constitute a Globin domain. His95 contributes to the heme b binding site.

Belongs to the globin family. In terms of assembly, monomer.

The chain is Globin from Dolabella auricularia (Shoulderblade sea cat).